Reading from the N-terminus, the 1595-residue chain is Pentafunctional AROM polypeptide (1595 aa).

The tract at residues 1–384 (MGVPTKISIL…HEPRASTVSN (384 aa)) is 3-dehydroquinate synthase. NAD(+)-binding positions include 44-46 (DTN), 81-84 (ESSK), 114-116 (GGV), and Asp119. Arg130 contributes to the 7-phospho-2-dehydro-3-deoxy-D-arabino-heptonate binding site. Residue 139-140 (TT) participates in NAD(+) binding. 7-phospho-2-dehydro-3-deoxy-D-arabino-heptonate-binding residues include Asp146 and Lys152. Position 161 (Lys161) interacts with NAD(+). Asn162 serves as a coordination point for 7-phospho-2-dehydro-3-deoxy-D-arabino-heptonate. Residues 179–182 (FLNT) and Asn190 each bind NAD(+). Zn(2+) is bound at residue Glu194. Residues 194 to 197 (EVIK) and Lys250 each bind 7-phospho-2-dehydro-3-deoxy-D-arabino-heptonate. The Proton acceptor; for 3-dehydroquinate synthase activity role is filled by Glu260. Residues 264–268 (RNLLN) and His271 each bind 7-phospho-2-dehydro-3-deoxy-D-arabino-heptonate. A Zn(2+)-binding site is contributed by His271. His275 acts as the Proton acceptor; for 3-dehydroquinate synthase activity in catalysis. 2 residues coordinate 7-phospho-2-dehydro-3-deoxy-D-arabino-heptonate: His287 and Lys356. Zn(2+) is bound at residue His287. The tract at residues 397 to 842 (VSPGVPKGLD…WDSLAQTFKV (446 aa)) is EPSP synthase. Cys824 (for EPSP synthase activity) is an active-site residue. Residues 866–1057 (ASIFIIGMRG…RRKENTFFVS (192 aa)) are shikimate kinase. 872–879 (GMRGAGKT) provides a ligand contact to ATP. Residues 1058 to 1278 (LTLPDLGLAA…AAPGQLSARE (221 aa)) are 3-dehydroquinase. His1181 acts as the Proton acceptor; for 3-dehydroquinate dehydratase activity in catalysis. The Schiff-base intermediate with substrate; for 3-dehydroquinate dehydratase activity role is filled by Lys1209. Positions 1291–1595 (AKKFAVIGNP…MGVLPSEDIS (305 aa)) are shikimate dehydrogenase.

In the N-terminal section; belongs to the sugar phosphate cyclases superfamily. Dehydroquinate synthase family. It in the 2nd section; belongs to the EPSP synthase family. The protein in the 3rd section; belongs to the shikimate kinase family. This sequence in the 4th section; belongs to the type-I 3-dehydroquinase family. In the C-terminal section; belongs to the shikimate dehydrogenase family. Homodimer. It depends on Zn(2+) as a cofactor.

It localises to the cytoplasm. It catalyses the reaction 7-phospho-2-dehydro-3-deoxy-D-arabino-heptonate = 3-dehydroquinate + phosphate. The enzyme catalyses 3-dehydroquinate = 3-dehydroshikimate + H2O. It carries out the reaction shikimate + NADP(+) = 3-dehydroshikimate + NADPH + H(+). The catalysed reaction is shikimate + ATP = 3-phosphoshikimate + ADP + H(+). It catalyses the reaction 3-phosphoshikimate + phosphoenolpyruvate = 5-O-(1-carboxyvinyl)-3-phosphoshikimate + phosphate. The protein operates within metabolic intermediate biosynthesis; chorismate biosynthesis; chorismate from D-erythrose 4-phosphate and phosphoenolpyruvate: step 2/7. It participates in metabolic intermediate biosynthesis; chorismate biosynthesis; chorismate from D-erythrose 4-phosphate and phosphoenolpyruvate: step 3/7. Its pathway is metabolic intermediate biosynthesis; chorismate biosynthesis; chorismate from D-erythrose 4-phosphate and phosphoenolpyruvate: step 4/7. It functions in the pathway metabolic intermediate biosynthesis; chorismate biosynthesis; chorismate from D-erythrose 4-phosphate and phosphoenolpyruvate: step 5/7. The protein operates within metabolic intermediate biosynthesis; chorismate biosynthesis; chorismate from D-erythrose 4-phosphate and phosphoenolpyruvate: step 6/7. The AROM polypeptide catalyzes 5 consecutive enzymatic reactions in prechorismate polyaromatic amino acid biosynthesis. The sequence is that of Pentafunctional AROM polypeptide from Ajellomyces capsulatus (strain H143) (Darling's disease fungus).